The sequence spans 375 residues: tRNA-specific 2-thiouridylase MnmA (375 aa).

Residues 13–20 and M39 each bind ATP; that span reads AMSGGVDS. C111 acts as the Nucleophile in catalysis. A disulfide bridge links C111 with C208. G135 provides a ligand contact to ATP. The tract at residues 158–160 is interaction with tRNA; sequence KDQ. The Cysteine persulfide intermediate role is filled by C208. The interaction with tRNA stretch occupies residues 313-314; the sequence is RY.

It belongs to the MnmA/TRMU family.

It is found in the cytoplasm. It catalyses the reaction S-sulfanyl-L-cysteinyl-[protein] + uridine(34) in tRNA + AH2 + ATP = 2-thiouridine(34) in tRNA + L-cysteinyl-[protein] + A + AMP + diphosphate + H(+). Catalyzes the 2-thiolation of uridine at the wobble position (U34) of tRNA, leading to the formation of s(2)U34. This chain is tRNA-specific 2-thiouridylase MnmA, found in Geotalea uraniireducens (strain Rf4) (Geobacter uraniireducens).